The sequence spans 126 residues: Glycine cleavage system H protein (126 aa).

The Lipoyl-binding domain maps to threonine 21–lysine 103. An N6-lipoyllysine modification is found at lysine 62.

Belongs to the GcvH family. The glycine cleavage system is composed of four proteins: P, T, L and H. It depends on (R)-lipoate as a cofactor.

In terms of biological role, the glycine cleavage system catalyzes the degradation of glycine. The H protein shuttles the methylamine group of glycine from the P protein to the T protein. The sequence is that of Glycine cleavage system H protein from Vibrio vulnificus (strain CMCP6).